Reading from the N-terminus, the 713-residue chain is Methionine--tRNA ligase (713 aa).

A 'HIGH' region motif is present at residues 17–27 (PYANGPIHIGH). Zn(2+) is bound by residues C149, C152, C162, and C165. The short motif at 345–349 (KLSTS) is the 'KMSKS' region element. Residue T348 participates in ATP binding. Positions 530–564 (VRTSTPDDDPAGAVGWEDAGAPLLPAGHPIPSGPD) are disordered. The region spanning 614–713 (DFTQLDLRAG…TEAEDGSVVR (100 aa)) is the tRNA-binding domain.

Belongs to the class-I aminoacyl-tRNA synthetase family. MetG type 1 subfamily. In terms of assembly, homodimer. Zn(2+) is required as a cofactor.

The protein resides in the cytoplasm. The catalysed reaction is tRNA(Met) + L-methionine + ATP = L-methionyl-tRNA(Met) + AMP + diphosphate. Its function is as follows. Is required not only for elongation of protein synthesis but also for the initiation of all mRNA translation through initiator tRNA(fMet) aminoacylation. In Salinibacter ruber (strain DSM 13855 / M31), this protein is Methionine--tRNA ligase.